The primary structure comprises 319 residues: Acetyl esterase (319 aa).

The short motif at 91–93 (HGG) is the Involved in the stabilization of the negatively charged intermediate by the formation of the oxyanion hole element. Catalysis depends on residues Ser-165, Asp-262, and His-292.

This sequence belongs to the 'GDXG' lipolytic enzyme family. In terms of assembly, homodimer. Interacts with MalT and MelA.

It localises to the cytoplasm. Its function is as follows. Displays esterase activity towards short chain fatty esters (acyl chain length of up to 8 carbons). Able to hydrolyze triacetylglycerol (triacetin) and tributyrylglycerol (tributyrin), but not trioleylglycerol (triolein) or cholesterol oleate. Negatively regulates MalT activity by antagonizing maltotriose binding. Inhibits MelA galactosidase activity. This chain is Acetyl esterase, found in Escherichia coli O7:K1 (strain IAI39 / ExPEC).